Reading from the N-terminus, the 545-residue chain is CTP synthase (545 aa).

Residues 1 to 266 are amidoligase domain; sequence MATNYIFVTG…DDFVCERFRL (266 aa). Serine 14 serves as a coordination point for CTP. Serine 14 is a binding site for UTP. Residues 15 to 20 and aspartate 72 contribute to the ATP site; that span reads SLGKGI. Residues aspartate 72 and glutamate 140 each coordinate Mg(2+). CTP contacts are provided by residues 147–149, 187–192, and lysine 223; these read DIE and KTKPTQ. UTP-binding positions include 187 to 192 and lysine 223; that span reads KTKPTQ. 239-241 contacts ATP; that stretch reads KDV. A Glutamine amidotransferase type-1 domain is found at 291–542; the sequence is TIGMVGKYTE…VKAAYENHKK (252 aa). Glycine 352 is a binding site for L-glutamine. The active-site Nucleophile; for glutamine hydrolysis is the cysteine 379. Residues 380 to 383, glutamate 403, and arginine 470 each bind L-glutamine; that span reads LGMQ. Catalysis depends on residues histidine 515 and glutamate 517.

The protein belongs to the CTP synthase family. As to quaternary structure, homotetramer.

It carries out the reaction UTP + L-glutamine + ATP + H2O = CTP + L-glutamate + ADP + phosphate + 2 H(+). The catalysed reaction is L-glutamine + H2O = L-glutamate + NH4(+). It catalyses the reaction UTP + NH4(+) + ATP = CTP + ADP + phosphate + 2 H(+). It functions in the pathway pyrimidine metabolism; CTP biosynthesis via de novo pathway; CTP from UDP: step 2/2. With respect to regulation, allosterically activated by GTP, when glutamine is the substrate; GTP has no effect on the reaction when ammonia is the substrate. The allosteric effector GTP functions by stabilizing the protein conformation that binds the tetrahedral intermediate(s) formed during glutamine hydrolysis. Inhibited by the product CTP, via allosteric rather than competitive inhibition. In terms of biological role, catalyzes the ATP-dependent amination of UTP to CTP with either L-glutamine or ammonia as the source of nitrogen. Regulates intracellular CTP levels through interactions with the four ribonucleotide triphosphates. This Haemophilus influenzae (strain ATCC 51907 / DSM 11121 / KW20 / Rd) protein is CTP synthase.